Consider the following 83-residue polypeptide: Mu-theraphotoxin-Hhn2p (83 aa).

The first 21 residues, 1-21 (MKASMYLALAGLVLLFVVGYA), serve as a signal peptide directing secretion. Residues 22–48 (SESEEKEFPRELLSKIFAVDDFKGEER) constitute a propeptide that is removed on maturation. 3 disulfides stabilise this stretch: Cys-50/Cys-65, Cys-57/Cys-70, and Cys-64/Cys-77. Leucine amide is present on Leu-81.

Belongs to the neurotoxin 10 (Hwtx-1) family. 15 (Hntx-3) subfamily. In terms of assembly, monomer. Expressed by the venom gland.

The protein localises to the secreted. Lethal neurotoxin. Selectively blocks tetrodotoxin-sensitive voltage-gated sodium channels (Nav). Does not affect tetrodotoxin-resistant voltage-gated sodium channels or calcium channels. The chain is Mu-theraphotoxin-Hhn2p from Cyriopagopus hainanus (Chinese bird spider).